A 131-amino-acid polypeptide reads, in one-letter code: Large ribosomal subunit protein bL19 (131 aa).

Residues 110-131 (KSARIAERTDDRAKKAKATAAE) are disordered. Positions 113–122 (RIAERTDDRA) are enriched in basic and acidic residues.

The protein belongs to the bacterial ribosomal protein bL19 family.

In terms of biological role, this protein is located at the 30S-50S ribosomal subunit interface and may play a role in the structure and function of the aminoacyl-tRNA binding site. The protein is Large ribosomal subunit protein bL19 of Azorhizobium caulinodans (strain ATCC 43989 / DSM 5975 / JCM 20966 / LMG 6465 / NBRC 14845 / NCIMB 13405 / ORS 571).